The sequence spans 179 residues: Large ribosomal subunit protein uL5 (179 aa).

The protein belongs to the universal ribosomal protein uL5 family. Part of the 50S ribosomal subunit; part of the 5S rRNA/L5/L18/L25 subcomplex. Contacts the 5S rRNA and the P site tRNA. Forms a bridge to the 30S subunit in the 70S ribosome.

Functionally, this is one of the proteins that bind and probably mediate the attachment of the 5S RNA into the large ribosomal subunit, where it forms part of the central protuberance. In the 70S ribosome it contacts protein S13 of the 30S subunit (bridge B1b), connecting the 2 subunits; this bridge is implicated in subunit movement. Contacts the P site tRNA; the 5S rRNA and some of its associated proteins might help stabilize positioning of ribosome-bound tRNAs. The polypeptide is Large ribosomal subunit protein uL5 (Citrobacter koseri (strain ATCC BAA-895 / CDC 4225-83 / SGSC4696)).